Here is a 310-residue protein sequence, read N- to C-terminus: Uracil phosphoribosyltransferase homolog (310 aa).

2 disordered regions span residues Met-1–Glu-27 and Ser-62–Asp-89. The span at Arg-16–Ser-25 shows a compositional bias: polar residues. Ser-25 is subject to Phosphoserine. GTP contacts are provided by residues Arg-134, Arg-143, and Glu-177–Asn-180. Position 187 (Arg-187) interacts with 5-phospho-alpha-D-ribose 1-diphosphate. Positions 204 and 233 each coordinate GTP. A 5-phospho-alpha-D-ribose 1-diphosphate-binding site is contributed by Tyr-239–Thr-247. Position 300–302 (Thr-300–Phe-302) interacts with uracil.

This sequence belongs to the UPRTase family.

It localises to the cytoplasm. Its subcellular location is the nucleus. The sequence is that of Uracil phosphoribosyltransferase homolog (Uprt) from Mus musculus (Mouse).